The sequence spans 547 residues: MAAKDVRFSSDARDRMLRGIDILNNAVKVTLGPKGRNVVIEKSFGAPRITKDGVTVAKEIELSDKFENLGAQLIREVASKQNDAAGDGTTTATILAASIVREGTKAVAAGLNPMDLKRGIDIAVAAVVADLKANSKKVTSNEEIAQVGTISANGDKSVGEMISTAMQKVGNEGVITVEEAKSLETELDVVEGMQFDRGYLSPYFITNAEKMIAELEDPFILVHEKKLSSLQALLPVLEAVVQSGKPLVIIAEDVEGEALATLVVNKLRGGLKVAAVKAPGFGDRRKAMLEDIAILTSGTLISEEIGIKLENVTLQMLGRAKRIRIDKESTTIIDGAGAKGEIEARIAQIKSQIAETTSDYDREKMQERLAKLAGGVAVIRVGGASEVEVKEKKDRVDDALNATRAAVEEGVLPGGGVALLRAIKALEGLTVENADQKTGVDIVRKAIQTPARQIVDNSGGDGAVVVGKLIENPSYAYGYNAQTDEYGDLVKLGIIDPTKVVRTALQDAASVGGLLITTEAIIAEQPKKDSPAMPGGGGMGGMGGMDF.

ATP is bound by residues 30-33 (TLGP), lysine 51, 87-91 (DGTTT), glycine 415, and aspartate 496. Residues 527 to 547 (KKDSPAMPGGGGMGGMGGMDF) are disordered. Residues 534–547 (PGGGGMGGMGGMDF) are compositionally biased toward gly residues.

It belongs to the chaperonin (HSP60) family. Forms a cylinder of 14 subunits composed of two heptameric rings stacked back-to-back. Interacts with the co-chaperonin GroES.

The protein localises to the cytoplasm. It carries out the reaction ATP + H2O + a folded polypeptide = ADP + phosphate + an unfolded polypeptide.. Its function is as follows. Together with its co-chaperonin GroES, plays an essential role in assisting protein folding. The GroEL-GroES system forms a nano-cage that allows encapsulation of the non-native substrate proteins and provides a physical environment optimized to promote and accelerate protein folding. The polypeptide is Chaperonin GroEL (Methylocella silvestris (strain DSM 15510 / CIP 108128 / LMG 27833 / NCIMB 13906 / BL2)).